Reading from the N-terminus, the 228-residue chain is 6-carboxyhexanoate--CoA ligase (228 aa).

It belongs to the BioW family. As to quaternary structure, homodimer. Mg(2+) is required as a cofactor.

The catalysed reaction is heptanedioate + ATP + CoA = 6-carboxyhexanoyl-CoA + AMP + diphosphate. It functions in the pathway metabolic intermediate metabolism; pimeloyl-CoA biosynthesis; pimeloyl-CoA from pimelate: step 1/1. Its function is as follows. Catalyzes the transformation of pimelate into pimeloyl-CoA with concomitant hydrolysis of ATP to AMP. This is 6-carboxyhexanoate--CoA ligase from Staphylococcus epidermidis (strain ATCC 12228 / FDA PCI 1200).